A 249-amino-acid chain; its full sequence is 5'-nucleotidase SurE (249 aa).

A divalent metal cation is bound by residues Asp8, Asp9, Ser39, and Asn91.

The protein belongs to the SurE nucleotidase family. A divalent metal cation is required as a cofactor.

The protein resides in the cytoplasm. The enzyme catalyses a ribonucleoside 5'-phosphate + H2O = a ribonucleoside + phosphate. In terms of biological role, nucleotidase that shows phosphatase activity on nucleoside 5'-monophosphates. This chain is 5'-nucleotidase SurE, found in Haemophilus influenzae (strain ATCC 51907 / DSM 11121 / KW20 / Rd).